The following is a 233-amino-acid chain: Ribose-5-phosphate isomerase A (233 aa).

Substrate contacts are provided by residues 28–31 (TGST), 83–86 (DGAD), and 96–99 (KGGG). The active-site Proton acceptor is glutamate 105. Lysine 123 contacts substrate.

The protein belongs to the ribose 5-phosphate isomerase family. In terms of assembly, homodimer.

It catalyses the reaction aldehydo-D-ribose 5-phosphate = D-ribulose 5-phosphate. It functions in the pathway carbohydrate degradation; pentose phosphate pathway; D-ribose 5-phosphate from D-ribulose 5-phosphate (non-oxidative stage): step 1/1. Functionally, catalyzes the reversible conversion of ribose-5-phosphate to ribulose 5-phosphate. The polypeptide is Ribose-5-phosphate isomerase A (Rhizobium rhizogenes (strain K84 / ATCC BAA-868) (Agrobacterium radiobacter)).